The following is a 644-amino-acid chain: Subversion of eukaryotic traffic protein A (644 aa).

The segment at M1–D400 is glucosyltransferase. The ptdIns(3)P-binding and localization domain stretch occupies residues P401 to I644.

Post-translationally, ubiquitinated and polyubiquitinated when ectopically produced in both yeast and mammalian cells; however it is unsure if this modification occurs during the L.pneumophila infection of host cells.

It localises to the secreted. Secreted effector that interferes with vesicular trafficking of host cells. Possesses glucohydrolase and mono-O-glucosyltransferase activity by using UDP-glucose as a sugar donor substrate. Is able to glucosylate histones H4 and H3.1 in vitro, but it is unlikely that histones are the natural substrates for SetA. May glycosylate a component of the host cell vesicle trafficking machinery during L.pneumophila infection. Binds with high specificity to phosphatidylinositol 3-phosphate (PtdIns(3)P), (with a dissociation constant value of 809 nM), which guides SetA to the cytosolic leaflet of the early phagosome of the host cell. The sequence is that of Subversion of eukaryotic traffic protein A (setA) from Legionella pneumophila subsp. pneumophila (strain Philadelphia 1 / ATCC 33152 / DSM 7513).